The sequence spans 627 residues: Transducer protein MpcT (627 aa).

2 helical membrane-spanning segments follow: residues 28–48 (MLTA…LTVF) and 55–75 (LIGV…TYLI). 2 HAMP domains span residues 78–132 (ADFV…VASR) and 192–247 (EQLR…DTIS). Positions 266–502 (RVDAVADRSA…DVVGMVEEVA (237 aa)) constitute a Methyl-accepting transducer domain. Residues Glu-310, Glu-416, and Glu-507 each carry the glutamate methyl ester (Glu) modification. Disordered stretches follow at residues 505-527 (SEET…DATD) and 557-627 (GTAD…ADSQ). A compositionally biased stretch (low complexity) spans 580-590 (AAAVVDQPQPA).

The protein belongs to the methyl-accepting chemotaxis (MCP) protein family. Interacts with CheA, CheY and CheW1. Methylated by CheR.

The protein resides in the cell membrane. Its function is as follows. Mediates bacteriorhodopsin- and halorhodopsin-dependent photoresponses by detecting membrane potential changes. Probably transduces the signal to the histidine kinase CheA. In Halobacterium salinarum (strain ATCC 29341 / DSM 671 / R1), this protein is Transducer protein MpcT (mpcT).